Consider the following 199-residue polypeptide: GTP cyclohydrolase 1 (199 aa).

Residues Cys89, His92, and Cys161 each contribute to the Zn(2+) site.

The protein belongs to the GTP cyclohydrolase I family. As to quaternary structure, toroid-shaped homodecamer, composed of two pentamers of five dimers.

The enzyme catalyses GTP + H2O = 7,8-dihydroneopterin 3'-triphosphate + formate + H(+). Its pathway is cofactor biosynthesis; 7,8-dihydroneopterin triphosphate biosynthesis; 7,8-dihydroneopterin triphosphate from GTP: step 1/1. In Bifidobacterium longum (strain NCC 2705), this protein is GTP cyclohydrolase 1.